The primary structure comprises 460 residues: VGFKAGVKDYRLTYYTPEYQTKDTDILAAFRVTPQPGVPPEEAGXAVAAESSTGTWTTVWTDGLTSLDRYKGRCYDIEPVPGEETQFIAYVAYPLDLFEEGSVTNMFTSIVGNVFGFKALRALRLEDLRIPPAYSKTFQGPPHGIQVERDKLNKYGRPLLGCTIKPKLGLSAKNYGRAVYECLRGGLDFTKDDENVNSQPFMRWRDRFCFCAEALYKAQAETGEIKGHYLNATAGTSEEMMKRAVFARELGVPIVMHDYLTGGFTSNTSLAHYCRDNGLLLHIHRAMHAVIDRQRNHGIHFRVLAKALRMSGGDHIHAGTVVGKLEGEREVTLGFVDLLRDDFIEKDRSRGIYFTQDWVSMPGVLPVASGGIHVWHMPALTEIFGDDSVLQFGGGTLGHPWGNAPGAVANRVALEACVQARNEGRDLAREGNEVIREATKWSPELAAACEVWKEIKFEFD.

The residue at position 4 (Lys-4) is an N6,N6,N6-trimethyllysine. Residues Asn-113 and Thr-163 each contribute to the substrate site. The active-site Proton acceptor is the Lys-165. Lys-167 serves as a coordination point for substrate. Positions 191, 193, and 194 each coordinate Mg(2+). Residue Lys-191 is modified to N6-carboxylysine. The active-site Proton acceptor is His-284. Residues Arg-285, His-317, and Ser-369 each coordinate substrate.

It belongs to the RuBisCO large chain family. Type I subfamily. Heterohexadecamer of 8 large chains and 8 small chains. Mg(2+) is required as a cofactor.

Its subcellular location is the plastid. The protein resides in the chloroplast. The catalysed reaction is 2 (2R)-3-phosphoglycerate + 2 H(+) = D-ribulose 1,5-bisphosphate + CO2 + H2O. It carries out the reaction D-ribulose 1,5-bisphosphate + O2 = 2-phosphoglycolate + (2R)-3-phosphoglycerate + 2 H(+). RuBisCO catalyzes two reactions: the carboxylation of D-ribulose 1,5-bisphosphate, the primary event in carbon dioxide fixation, as well as the oxidative fragmentation of the pentose substrate in the photorespiration process. Both reactions occur simultaneously and in competition at the same active site. This Cunninghamia lanceolata (China fir) protein is Ribulose bisphosphate carboxylase large chain.